A 344-amino-acid chain; its full sequence is Ferrochelatase (344 aa).

Fe cation is bound by residues His-191 and Glu-271.

This sequence belongs to the ferrochelatase family.

It is found in the cytoplasm. It catalyses the reaction heme b + 2 H(+) = protoporphyrin IX + Fe(2+). It functions in the pathway porphyrin-containing compound metabolism; protoheme biosynthesis; protoheme from protoporphyrin-IX: step 1/1. In terms of biological role, catalyzes the ferrous insertion into protoporphyrin IX. The polypeptide is Ferrochelatase (Pelagibacter ubique (strain HTCC1062)).